The primary structure comprises 107 residues: Ig kappa chain V-VI region NQ2-48.2.2 (107 aa).

Positions 1–23 (QILLTQSPAIMSASPGQKVTMTC) are framework-1. Cys-23 and Cys-87 are oxidised to a cystine. The interval 24-33 (SASSSVSYMH) is complementarity-determining-1. The framework-2 stretch occupies residues 34 to 48 (WYQQKSGTSPKRWIY). A complementarity-determining-2 region spans residues 49–55 (DTSKLAS). The tract at residues 56-87 (GVPARFSGSGSATSYSLTITSMQAEDAATYYC) is framework-3. The tract at residues 88-96 (QQWSSNPLT) is complementarity-determining-3. The interval 97–106 (FGAGTKLXLK) is framework-4.

Functionally, anti-2-phenyl oxazolone (PHOX) Antibody. This is Ig kappa chain V-VI region NQ2-48.2.2 from Mus musculus (Mouse).